Consider the following 358-residue polypeptide: G-protein coupled receptor 20 (358 aa).

Over 1-48 the chain is Extracellular; sequence MPSVSPAGPSAGAVPNATAVTTVRTNASGLEVPLFHLFARLDEELHGT. 2 N-linked (GlcNAc...) asparagine glycosylation sites follow: Asn-16 and Asn-26. Residues 49–69 form a helical membrane-spanning segment; that stretch reads FPGLWLALMAVHGAIFLAGLV. Topologically, residues 70–86 are cytoplasmic; sequence LNGLALYVFCCRTRAKT. Residues 87–107 traverse the membrane as a helical segment; it reads PSVIYTINLVVTDLLVGLSLP. The Extracellular segment spans residues 108 to 125; that stretch reads TRFAVYYGARGCLRCAFP. The chain crosses the membrane as a helical span at residues 126-146; that stretch reads HVLGYFLNMHCSILFLTCICV. Residues 147–168 lie on the Cytoplasmic side of the membrane; the sequence is DRYLAIVRPEGSRRCRQPACAR. The chain crosses the membrane as a helical span at residues 169–189; sequence AVCAFVWLAAGAVTLSVLGVT. Topologically, residues 190-196 are extracellular; the sequence is GSRPCCR. Residues 197–217 traverse the membrane as a helical segment; sequence VFALTVLEFLLPLLVISVFTG. Topologically, residues 218 to 238 are cytoplasmic; that stretch reads RIMCALSRPGLLHQGRQRRVR. A helical transmembrane segment spans residues 239–259; the sequence is AMQLLLTVLIIFLVCFTPFHA. At 260 to 275 the chain is on the extracellular side; the sequence is RQVAVALWPDMPHHTS. Residues 276–296 form a helical membrane-spanning segment; that stretch reads LVVYHVAVTLSSLNSCMDPIV. Residues 297 to 358 lie on the Cytoplasmic side of the membrane; that stretch reads YCFVTSGFQA…TQALANGPEA (62 aa). Residues 315–339 are disordered; sequence HGEREPSSGDVVSMHRSSKGSGRHH. Basic residues predominate over residues 330 to 339; sequence RSSKGSGRHH.

This sequence belongs to the G-protein coupled receptor 1 family. As to expression, ubiquitous with highest levels in intestinal tissues. In the brain detected in thalamus, putamen, and caudate, but not in frontal cortex, pons and hypothalamus.

The protein localises to the cell membrane. Its function is as follows. Orphan receptor with constitutive G(i) signaling activity that activate cyclic AMP. The chain is G-protein coupled receptor 20 (GPR20) from Homo sapiens (Human).